We begin with the raw amino-acid sequence, 377 residues long: Prostaglandin E synthase 2 (377 aa).

Over 1 to 57 the chain is Lumenal; sequence MDPAARVVRALWPGGCALAWRLGGRPQPLLPTQSRAGFAGAAGGPSPVAAARKGSPR. A helical membrane pass occupies residues 58 to 74; the sequence is LLGAAALALGGALGLYH. Residues 75–377 are Cytoplasmic-facing; sequence TARWHLRAQD…RAITEASPAH (303 aa). The Glutaredoxin domain maps to 90 to 193; sequence SAAQLSLSSR…EIITYYPAMK (104 aa). The residue at position 95 (Ser-95) is a Phosphoserine. Residues Val-148 and 164–165 each bind glutathione; that span reads DS. In terms of domain architecture, GST C-terminal spans 263–377; it reads YIVREGKFGA…RAITEASPAH (115 aa).

The protein belongs to the GST superfamily. In terms of assembly, homodimer. May interact with CEBPB. Interacts with EXOSC10. Post-translationally, synthesized as a Golgi membrane-associated protein, and the proteolytic removal of the N-terminal hydrophobic domain leads to the formation of a mature cytosolic enzyme. Widely expressed. Expressed in the heart, including apex, inter-ventricular septum, both atria and ventricles, but not in the aorta. Also expressed in fetal heart. Detected in various regions of the brain: cerebellum; occipital, frontal and parietal lobes. Also expressed in the lymph nodes, skeletal muscle, kidney and trachea, but not in the thymus or lung. Overexpressed in colorectal cancer.

It is found in the golgi apparatus membrane. Its subcellular location is the cytoplasm. The protein localises to the perinuclear region. It carries out the reaction prostaglandin H2 = prostaglandin E2. The enzyme catalyses prostaglandin H2 = (12S)-hydroxy-(5Z,8E,10E)-heptadecatrienoate + malonaldehyde. Its pathway is lipid metabolism; prostaglandin biosynthesis. Its activity is regulated as follows. Isomerase activity is increased by sulfhydril compounds. Dithiothreitol (DTT) is most effective, followed by dihydrolipoic acid, glutathione (GSH) and 2-mercaptoethanol. Isomerase that catalyzes the conversion of PGH2 into the more stable prostaglandin E2 (PGE2) (in vitro). The biological function and the GSH-dependent property of PTGES2 is still under debate. In vivo, PTGES2 could form a complex with GSH and heme and would not participate in PGE2 synthesis but would catalyze the degradation of prostaglandin E2 H2 (PGH2) to 12(S)-hydroxy-5(Z),8(E),10(E)-heptadecatrienoic acid (HHT) and malondialdehyde (MDA). In Homo sapiens (Human), this protein is Prostaglandin E synthase 2 (PTGES2).